The following is a 141-amino-acid chain: Large ribosomal subunit protein uL11 (141 aa).

This sequence belongs to the universal ribosomal protein uL11 family. In terms of assembly, part of the ribosomal stalk of the 50S ribosomal subunit. Interacts with L10 and the large rRNA to form the base of the stalk. L10 forms an elongated spine to which L12 dimers bind in a sequential fashion forming a multimeric L10(L12)X complex. Post-translationally, one or more lysine residues are methylated.

Functionally, forms part of the ribosomal stalk which helps the ribosome interact with GTP-bound translation factors. This chain is Large ribosomal subunit protein uL11, found in Pelodictyon phaeoclathratiforme (strain DSM 5477 / BU-1).